Reading from the N-terminus, the 414-residue chain is Serine/threonine transporter SstT (414 aa).

Transmembrane regions (helical) follow at residues 16-36 (GSLVKQILVGLVLGILLAWIS), 46-66 (LGTLFVGALKAVAPVLVLMLV), 84-104 (ILFLYLLGTFSAALAAVVFSF), 143-163 (ALLNANYIGILVWAVSLGFAL), 180-200 (AVTFMVKLVIRFAPIGIFGLV), 219-239 (LVVLIGCMLLVALVVNPLLVF), 300-320 (MAGAAITITVLTLAAVHTLGV), and 332-352 (VVASLCACGASGVAGGSLLLI).

It belongs to the dicarboxylate/amino acid:cation symporter (DAACS) (TC 2.A.23) family.

It localises to the cell inner membrane. The enzyme catalyses L-serine(in) + Na(+)(in) = L-serine(out) + Na(+)(out). It catalyses the reaction L-threonine(in) + Na(+)(in) = L-threonine(out) + Na(+)(out). Functionally, involved in the import of serine and threonine into the cell, with the concomitant import of sodium (symport system). The sequence is that of Serine/threonine transporter SstT from Salmonella schwarzengrund (strain CVM19633).